The following is a 190-amino-acid chain: Elongation factor P-like protein (190 aa).

Belongs to the elongation factor P family.

This chain is Elongation factor P-like protein, found in Klebsiella pneumoniae subsp. pneumoniae (strain ATCC 700721 / MGH 78578).